The sequence spans 354 residues: Uroporphyrinogen decarboxylase (354 aa).

Residues 27–31, aspartate 77, tyrosine 154, serine 209, and histidine 327 each bind substrate; that span reads RQAGR.

The protein belongs to the uroporphyrinogen decarboxylase family. Homodimer.

The protein resides in the cytoplasm. It catalyses the reaction uroporphyrinogen III + 4 H(+) = coproporphyrinogen III + 4 CO2. It functions in the pathway porphyrin-containing compound metabolism; protoporphyrin-IX biosynthesis; coproporphyrinogen-III from 5-aminolevulinate: step 4/4. Catalyzes the decarboxylation of four acetate groups of uroporphyrinogen-III to yield coproporphyrinogen-III. The chain is Uroporphyrinogen decarboxylase from Pseudomonas savastanoi pv. phaseolicola (strain 1448A / Race 6) (Pseudomonas syringae pv. phaseolicola (strain 1448A / Race 6)).